The sequence spans 103 residues: Large ribosomal subunit protein uL24 (103 aa).

Belongs to the universal ribosomal protein uL24 family. As to quaternary structure, part of the 50S ribosomal subunit.

Functionally, one of two assembly initiator proteins, it binds directly to the 5'-end of the 23S rRNA, where it nucleates assembly of the 50S subunit. One of the proteins that surrounds the polypeptide exit tunnel on the outside of the subunit. The protein is Large ribosomal subunit protein uL24 (rplX) of Bacillus spizizenii (strain ATCC 23059 / NRRL B-14472 / W23) (Bacillus subtilis subsp. spizizenii).